We begin with the raw amino-acid sequence, 132 residues long: Small ribosomal subunit protein uS8 (132 aa).

Belongs to the universal ribosomal protein uS8 family. As to quaternary structure, part of the 30S ribosomal subunit. Contacts proteins S5 and S12.

Its function is as follows. One of the primary rRNA binding proteins, it binds directly to 16S rRNA central domain where it helps coordinate assembly of the platform of the 30S subunit. The protein is Small ribosomal subunit protein uS8 of Paenarthrobacter aurescens (strain TC1).